Consider the following 345-residue polypeptide: Heat-inducible transcription repressor HrcA (345 aa).

It belongs to the HrcA family.

Functionally, negative regulator of class I heat shock genes (grpE-dnaK-dnaJ and groELS operons). Prevents heat-shock induction of these operons. The sequence is that of Heat-inducible transcription repressor HrcA from Tetragenococcus halophilus (Pediococcus halophilus).